Consider the following 428-residue polypeptide: Sulfhydrogenase 1 subunit alpha (428 aa).

Positions 65, 68, 418, and 421 each coordinate Ni(2+). Residue C68 participates in Fe cation binding. C421 provides a ligand contact to Fe cation.

The protein belongs to the [NiFe]/[NiFeSe] hydrogenase large subunit family. As to quaternary structure, heterotetramer of alpha, beta, gamma and delta subunits. The nickel-containing alpha and delta subunits constitute the hydrogenase activity. The beta and gamma subunits (flavin-containing dimer) constitute the sulfur reductase activity. Requires Ni(2+) as cofactor. The cofactor is Fe cation.

Its subcellular location is the cytoplasm. The enzyme catalyses H2 + NADP(+) = NADPH + H(+). In terms of biological role, part of a bifunctional enzyme complex that functions as an NADPH-dependent hydrogen-evolving hydrogenase with sulfur-reducing activity. May play a role in hydrogen cycling during fermentative growth. Activity not exhibited with NAD. The alpha and delta subunits form the hydrogenase component that catalyzes the reduction of protons to evolve hydrogen. The sequence is that of Sulfhydrogenase 1 subunit alpha from Pyrococcus furiosus (strain ATCC 43587 / DSM 3638 / JCM 8422 / Vc1).